The sequence spans 389 residues: Radial spoke head protein 3 homolog B (389 aa).

Residues 63–106 (PTGQVPGQPDPLELQRQQQARRRALARKRAQEQLKPRTPEPVEG) form a disordered region. Over residues 81–90 (QARRRALARK) the composition is skewed to basic residues. The span at 91–106 (RAQEQLKPRTPEPVEG) shows a compositional bias: basic and acidic residues. Thr-143 bears the Phosphothreonine; by MAPK1 mark. Residues 206-242 (YEEIRNVELAEVQRLEEQERRHREEKERRKKQQWEIV) are a coiled coil. A disordered region spans residues 332–389 (EAMPPGQKTNVINGPNTVTDPSVTTLHTQKPVLDRVSSQPAPSQERKPVEEGGHLMAE). Polar residues predominate over residues 338-359 (QKTNVINGPNTVTDPSVTTLHT). The span at 375–389 (QERKPVEEGGHLMAE) shows a compositional bias: basic and acidic residues.

It belongs to the flagellar radial spoke RSP3 family. In terms of assembly, component of the axonemal radial spoke 1 (RS1) and 2 (RS2) complexes, at least composed of spoke head proteins RSPH1, RSPH3B, RSPH9 and the cilia-specific component RSPH4A or sperm-specific component RSPH6A, spoke stalk proteins RSPH14, DNAJB13, DYDC1, ROPN1L and NME5, and the RS1 complex-specific anchor protein IQUB. Interacts with IQUB. Interacts with phosphorylated MAPK1. Interacts with MEK1. Interacts with PKA regulatory subunits PRKAR1A and PRKAR1B. Interacts with RSPH1. Interacts with RSPH4A. Interacts with RSPH6A. Interacts with RSPH9. Interacts with LRRC23. Expressed in ependymal cells (at protein level).

It localises to the cytoplasm. Its subcellular location is the cytoskeleton. The protein resides in the cilium axoneme. The protein localises to the flagellum axoneme. Functionally, functions as part of axonemal radial spoke complexes that play an important part in the motility of sperm and cilia. Functions as a protein kinase A-anchoring protein that scaffolds the cAMP-dependent protein kinase holoenzyme. May serve as a point of convergence for MAPK and PKA signaling in cilia. The polypeptide is Radial spoke head protein 3 homolog B (Rsph3b) (Mus musculus (Mouse)).